A 506-amino-acid chain; its full sequence is Fe(3+)-transport system permease protein FbpB 2 (506 aa).

The next 12 membrane-spanning stretches (helical) occupy residues 9 to 29 (LTLL…YVIL), 57 to 77 (LLMV…AFLL), 90 to 110 (VAMT…WISL), 116 to 136 (VFWG…YLPV), 174 to 194 (IGSS…AVSI), 218 to 238 (ALLS…EIFF), 275 to 295 (IFIL…IVGT), 314 to 334 (FIIS…LVWA), 350 to 370 (PYLL…YFSI), 379 to 399 (TFFV…QTTL), 428 to 448 (LTLP…FLNL), and 480 to 500 (AAAT…VFLL). The ABC transmembrane type-1 1 domain occupies 52–233 (LSNTMLLMVC…LMAICILIVF (182 aa)). Residues 310–500 (FSNSFIISGL…LFSGIPVFLL (191 aa)) form the ABC transmembrane type-1 2 domain.

This sequence belongs to the binding-protein-dependent transport system permease family. FbpB subfamily. The complex is composed of two ATP-binding proteins (FbpC), two transmembrane proteins (FbpB) and a solute-binding protein (FbpA).

The protein resides in the cell inner membrane. Its function is as follows. Part of the ABC transporter complex FbpABC (TC 3.A.1.10.1) involved in Fe(3+) ions import. Probably responsible for the translocation of the substrate across the membrane. The chain is Fe(3+)-transport system permease protein FbpB 2 (fbpB2) from Haemophilus influenzae (strain ATCC 51907 / DSM 11121 / KW20 / Rd).